Here is a 388-residue protein sequence, read N- to C-terminus: Succinate--CoA ligase [ADP-forming] subunit beta (388 aa).

In terms of domain architecture, ATP-grasp spans 9 to 244; it reads KQLFARYGLP…QSQEDPREAQ (236 aa). Residues Lys46, 53–55, Glu99, Thr102, and Glu107 contribute to the ATP site; that span reads GRG. Mg(2+) is bound by residues Asn199 and Asp213. Residues Asn264 and 321-323 contribute to the substrate site; that span reads GIV.

This sequence belongs to the succinate/malate CoA ligase beta subunit family. In terms of assembly, heterotetramer of two alpha and two beta subunits. Mg(2+) serves as cofactor.

It catalyses the reaction succinate + ATP + CoA = succinyl-CoA + ADP + phosphate. The catalysed reaction is GTP + succinate + CoA = succinyl-CoA + GDP + phosphate. Its pathway is carbohydrate metabolism; tricarboxylic acid cycle; succinate from succinyl-CoA (ligase route): step 1/1. Its function is as follows. Succinyl-CoA synthetase functions in the citric acid cycle (TCA), coupling the hydrolysis of succinyl-CoA to the synthesis of either ATP or GTP and thus represents the only step of substrate-level phosphorylation in the TCA. The beta subunit provides nucleotide specificity of the enzyme and binds the substrate succinate, while the binding sites for coenzyme A and phosphate are found in the alpha subunit. The sequence is that of Succinate--CoA ligase [ADP-forming] subunit beta from Salmonella choleraesuis (strain SC-B67).